Here is an 81-residue protein sequence, read N- to C-terminus: ATP synthase subunit c (81 aa).

Helical transmembrane passes span 5 to 25 and 57 to 77; these read VAAASVIAAALAVGLAAIGPG and LAFMESLTIYGLVIALVLLFA.

It belongs to the ATPase C chain family. As to quaternary structure, F-type ATPases have 2 components, F(1) - the catalytic core - and F(0) - the membrane proton channel. F(1) has five subunits: alpha(3), beta(3), gamma(1), delta(1), epsilon(1). F(0) has four main subunits: a(1), b(1), b'(1) and c(10-14). The alpha and beta chains form an alternating ring which encloses part of the gamma chain. F(1) is attached to F(0) by a central stalk formed by the gamma and epsilon chains, while a peripheral stalk is formed by the delta, b and b' chains.

It is found in the cellular thylakoid membrane. F(1)F(0) ATP synthase produces ATP from ADP in the presence of a proton or sodium gradient. F-type ATPases consist of two structural domains, F(1) containing the extramembraneous catalytic core and F(0) containing the membrane proton channel, linked together by a central stalk and a peripheral stalk. During catalysis, ATP synthesis in the catalytic domain of F(1) is coupled via a rotary mechanism of the central stalk subunits to proton translocation. Its function is as follows. Key component of the F(0) channel; it plays a direct role in translocation across the membrane. A homomeric c-ring of between 10-14 subunits forms the central stalk rotor element with the F(1) delta and epsilon subunits. The chain is ATP synthase subunit c from Microcystis aeruginosa (strain NIES-843 / IAM M-2473).